We begin with the raw amino-acid sequence, 150 residues long: Large ribosomal subunit protein bL9 (150 aa).

It belongs to the bacterial ribosomal protein bL9 family.

Its function is as follows. Binds to the 23S rRNA. In Photorhabdus laumondii subsp. laumondii (strain DSM 15139 / CIP 105565 / TT01) (Photorhabdus luminescens subsp. laumondii), this protein is Large ribosomal subunit protein bL9.